The sequence spans 343 residues: MKFLDQAKVYVRSGDGGAGSVSFRREKFIEFGGPDGGDGGRGGDVWLEAVDGLNTLIDYRYQQHFKAKTGVHGMGRNMTGAKGADVTLKVPAGTQVFEEDNETLICDLTVVGQRFLLAKGGNGGFGNQHFKTSTNQAPRRANPGLPGEELNIWLRLKLIADAGLVGLPNAGKSTFLAAVTAAKPKIADYPFTTLHPGLGVARIDAREFVIADIPGLIEGAHEGVGIGDRFLGHVERTRVLLHLVSAQEENPGKAYKTVRAELDAYGNGLIEKVEILALSQVDTLDADARRKKVASLKRAAGRAPMLLSAVTGEGVEAVLRALMTVIAEARAEAAPVVETRWEK.

The Obg domain maps to 1 to 159 (MKFLDQAKVY…LNIWLRLKLI (159 aa)). One can recognise an OBG-type G domain in the interval 160–327 (ADAGLVGLPN…VLRALMTVIA (168 aa)). GTP contacts are provided by residues 166–173 (GLPNAGKS), 191–195 (FTTLH), 212–215 (DIPG), 279–282 (SQVD), and 308–310 (SAV). Mg(2+)-binding residues include serine 173 and threonine 193.

This sequence belongs to the TRAFAC class OBG-HflX-like GTPase superfamily. OBG GTPase family. As to quaternary structure, monomer. The cofactor is Mg(2+).

The protein resides in the cytoplasm. Its function is as follows. An essential GTPase which binds GTP, GDP and possibly (p)ppGpp with moderate affinity, with high nucleotide exchange rates and a fairly low GTP hydrolysis rate. Plays a role in control of the cell cycle, stress response, ribosome biogenesis and in those bacteria that undergo differentiation, in morphogenesis control. The sequence is that of GTPase Obg from Mesorhizobium japonicum (strain LMG 29417 / CECT 9101 / MAFF 303099) (Mesorhizobium loti (strain MAFF 303099)).